The primary structure comprises 196 residues: Thymidylate kinase (196 aa).

Residue 7–14 (GIDGSGKT) participates in ATP binding.

This sequence belongs to the thymidylate kinase family.

It carries out the reaction dTMP + ATP = dTDP + ADP. Its function is as follows. Phosphorylation of dTMP to form dTDP in both de novo and salvage pathways of dTTP synthesis. In Wolbachia pipientis wMel, this protein is Thymidylate kinase.